A 191-amino-acid polypeptide reads, in one-letter code: MLSFLSSNISNARQTLAQVLNFALVLSSAFMMWKGLSVFTGSSSPIVVVLSGSMEPAFQRGDLLFLENRRPRAEIGEIVVYNVRGKDIPIVHRVVRTYPEIEGKTKQVKEISDASSTPSNMLLTKGDNNVADDTELYARGQDYLHREEDIVGSVRGYIPMVGYVTIMLSEHPWLKSVLLGIMGVMVMLQRE.

Residues 1 to 14 (MLSFLSSNISNARQ) are Cytoplasmic-facing. Residues 15-33 (TLAQVLNFALVLSSAFMMW) traverse the membrane as a helical; Signal-anchor for type II membrane protein segment. Residues 34-191 (KGLSVFTGSS…MGVMVMLQRE (158 aa)) are Lumenal-facing. Active-site charge relay system residues include serine 53, histidine 92, and aspartate 133. The segment at 177 to 188 (VLLGIMGVMVML) is C-terminal short (CTS) helix.

This sequence belongs to the peptidase S26B family. In terms of assembly, component of the signal peptidase complex (SPC) composed of a catalytic subunit SEC11 and three accessory subunits SPC1, SPC2 and SPC3. The complex induces a local thinning of the ER membrane which is used to measure the length of the signal peptide (SP) h-region of protein substrates. This ensures the selectivity of the complex towards h-regions shorter than 18-20 amino acids. SPC associates with the translocon complex.

The protein localises to the endoplasmic reticulum membrane. The enzyme catalyses Cleavage of hydrophobic, N-terminal signal or leader sequences from secreted and periplasmic proteins.. Its function is as follows. Catalytic component of the signal peptidase complex (SPC) which catalyzes the cleavage of N-terminal signal sequences from nascent proteins as they are translocated into the lumen of the endoplasmic reticulum. Specifically cleaves N-terminal signal peptides that contain a hydrophobic alpha-helix (h-region) shorter than 18-20 amino acids. In Aspergillus terreus (strain NIH 2624 / FGSC A1156), this protein is Signal peptidase complex catalytic subunit sec11 (sec11).